Reading from the N-terminus, the 272-residue chain is Phosphoglycolate phosphatase (272 aa).

Asp19 acts as the Nucleophile in catalysis. The Mg(2+) site is built by Asp19, Asp21, and Asp182.

It belongs to the HAD-like hydrolase superfamily. CbbY/CbbZ/Gph/YieH family. The cofactor is Mg(2+).

The catalysed reaction is 2-phosphoglycolate + H2O = glycolate + phosphate. Its pathway is organic acid metabolism; glycolate biosynthesis; glycolate from 2-phosphoglycolate: step 1/1. Specifically catalyzes the dephosphorylation of 2-phosphoglycolate. Is involved in the dissimilation of the intracellular 2-phosphoglycolate formed during the DNA repair of 3'-phosphoglycolate ends, a major class of DNA lesions induced by oxidative stress. The polypeptide is Phosphoglycolate phosphatase (Pseudomonas savastanoi pv. phaseolicola (strain 1448A / Race 6) (Pseudomonas syringae pv. phaseolicola (strain 1448A / Race 6))).